Reading from the N-terminus, the 223-residue chain is MTQDQLKQAVAQAAVDFILPKLDDKSIVGVGTGSTANCFIDALAKHKAAFDGAVASSQATAARLKAHGIPVYELNTVSDLEFYVDGADESDEHLNLIKGGGAALTREKIVAAVANTFICIADGSKLVPVLGAFPLPVEVIPMARSHVARQLVKLGGDPVYREGVLTDNGNIIIDVHNMSITNPVELEAQINAIVGVVTNGLFAARPADLLLLGTAEGVKTLTR.

Substrate is bound by residues 32 to 35, 85 to 88, and 98 to 101; these read TGST, DGAD, and KGGG. Residue Glu-107 is the Proton acceptor of the active site. Lys-125 is a substrate binding site.

It belongs to the ribose 5-phosphate isomerase family. As to quaternary structure, homodimer.

It catalyses the reaction aldehydo-D-ribose 5-phosphate = D-ribulose 5-phosphate. The protein operates within carbohydrate degradation; pentose phosphate pathway; D-ribose 5-phosphate from D-ribulose 5-phosphate (non-oxidative stage): step 1/1. Functionally, catalyzes the reversible conversion of ribose-5-phosphate to ribulose 5-phosphate. This is Ribose-5-phosphate isomerase A from Pseudomonas syringae pv. syringae (strain B728a).